Here is a 618-residue protein sequence, read N- to C-terminus: MADSSPQLAKLRSLMKERKVHVYVIPSEDSHSSEYIAACDARREFMSGFTGSAGCAIVTLEAAALATDGRYFNQAAKQLDGNWTLLKQGLQDVPTWQEWAASQSAGGKTVAVDPSLLPGSAAKKLNDQVRKAGGADLVPLDENIVDIAWGDSRPERPCQSVSVLPDELAGKPVTTKIEELRQELAKKNCPGFFVSMLDEVAWLFNLRGNDIPYNPVFFSYATITPETAILYVDESKLDESCRAHLRENNVQVKPYDSFFPDARQLHTEVKAKRQAGGDGVVVGNFLISNKASWAMSRALGGDGSVEEMRSPVGDAKAVKNETEMNGMRACHVRDGAALIEFFAWLEDQLADKKIMIDEVQAADKLEELRSKHQHFVGLSFPTISSTGANAAIIHYGPEKGSCATIDPGRVYLCDSGAQYRDGTTDTTRTLHFGKPSDAEKKAYTLVLKGLIGLDTAVFPKGTTGFALDCLARQHLWKNGLDYRHGTGHGVGSYLNVHEGPIGIGTRVQYTEVPLAPGNVLSNEPGYYEDGNFGIRIENIMMVREVQTEHCFGDKSYLGFEHVTMVPYCQSLIERDMLTADEKAWLNAYNDEVLKNTKGFFQGDDLTMAWLTRETRPIE.

The Mn(2+) site is built by D414, D425, E523, and E537.

It belongs to the peptidase M24B family. The cofactor is Mn(2+).

It catalyses the reaction Release of any N-terminal amino acid, including proline, that is linked to proline, even from a dipeptide or tripeptide.. Catalyzes the removal of a penultimate prolyl residue from the N-termini of peptides. The protein is Probable Xaa-Pro aminopeptidase P (AMPP) of Metarhizium robertsii (strain ARSEF 23 / ATCC MYA-3075) (Metarhizium anisopliae (strain ARSEF 23)).